Consider the following 432-residue polypeptide: Glutamyl-tRNA reductase (432 aa).

Residues 49 to 52 (TCNR), S109, 114 to 116 (EGQ), and Q120 each bind substrate. The active-site Nucleophile is the C50. Residue 198–203 (GAGRMS) participates in NADP(+) binding.

This sequence belongs to the glutamyl-tRNA reductase family. As to quaternary structure, homodimer.

The enzyme catalyses (S)-4-amino-5-oxopentanoate + tRNA(Glu) + NADP(+) = L-glutamyl-tRNA(Glu) + NADPH + H(+). It functions in the pathway porphyrin-containing compound metabolism; protoporphyrin-IX biosynthesis; 5-aminolevulinate from L-glutamyl-tRNA(Glu): step 1/2. The protein operates within porphyrin-containing compound metabolism; chlorophyll biosynthesis. Its function is as follows. Catalyzes the NADPH-dependent reduction of glutamyl-tRNA(Glu) to glutamate 1-semialdehyde (GSA). The sequence is that of Glutamyl-tRNA reductase from Synechococcus sp. (strain CC9902).